Reading from the N-terminus, the 542-residue chain is MFS thioclapurine efflux transporter tcpA (542 aa).

Residues 1 to 10 (MATVGTEEKN) show a composition bias toward basic and acidic residues. The segment at 1-24 (MATVGTEEKNPIGSASNTAEPNVT) is disordered. Residues 13–24 (GSASNTAEPNVT) are compositionally biased toward polar residues. A glycan (N-linked (GlcNAc...) asparagine) is linked at N22. The next 3 helical transmembrane spans lie at 32-52 (SGFK…LCGL), 75-97 (GWYT…KLYT), and 103-123 (MILL…AAAP). N124 is a glycosylation site (N-linked (GlcNAc...) asparagine). A run of 6 helical transmembrane segments spans residues 133 to 153 (AIAG…LVHA), 161 to 181 (ALLG…PFIG), 193 to 213 (CFII…FFVF), 234 to 254 (IPEI…LQWG), 265 to 285 (IIAL…LQVL), and 307 to 327 (IFAL…PIYF). Residue N332 is glycosylated (N-linked (GlcNAc...) asparagine). The helical transmembrane segment at 339-359 (GVNVMPLILGFLVMSIISGVI) threads the bilayer. N-linked (GlcNAc...) asparagine glycosylation occurs at N361. 4 consecutive transmembrane segments (helical) span residues 370–390 (MFLC…FDVG), 396–416 (WIGY…QPIV), 427–447 (VPFG…IFVA), and 500–520 (VLGQ…LGSL).

Belongs to the major facilitator superfamily.

Its subcellular location is the cell membrane. In terms of biological role, MFS efflux transporter probably involved in thioclapurine export. The polypeptide is MFS thioclapurine efflux transporter tcpA (Claviceps purpurea (strain 20.1) (Ergot fungus)).